Here is a 269-residue protein sequence, read N- to C-terminus: Cell cycle regulator CcrZ (269 aa).

ATP-binding residues include phenylalanine 39, histidine 76, tryptophan 77, methionine 78, and glycine 80. The Brenner's motif [HXDhX3N] motif lies at 164-171 (HCDVNHNN). The Proton acceptor role is filled by aspartate 166. The short motif at 180–203 (LYLIDWDGAMIADPAMDLGPLLYH) is the APH element.

Belongs to the aminoglycoside phosphotransferase family. As to quaternary structure, monomer in solution. Interacts with DnaA (via domains I (1-82) and III (111-326)). Interacts with DnaB. Interacts with FtsZ.

The protein localises to the cytoplasm. The catalysed reaction is D-ribose + ATP = D-ribose 5-phosphate + ADP + H(+). It catalyses the reaction 2-deoxy-D-ribose + ATP = 2-deoxy-D-ribose 5-phosphate + ADP + H(+). Activated by D-ribose and 2-deoxy-D-ribose. Slightly activated by kanamycin and gentamicin. In terms of biological role, plays a role in cell cycle regulation and chromosome integrity. Activates DnaA-dependent chromosomal DNA replication initiation ensuring that the chromosome is replicated at the right time during the cell cycle. May regulate replication initiation through phosphorylation of a possible second messenger or metabolite, and by interacting with replication initiation proteins. Has ATPase activity with D-ribose and 2-deoxy-D-ribose in vitro, but not with choline. Involved in DNA damage response. The chain is Cell cycle regulator CcrZ from Bacillus subtilis (strain 168).